A 327-amino-acid chain; its full sequence is uncharacterized protein (327 aa).

At 1 to 19 (MSIAQDRGIVFKLLSIYRA) the chain is on the cytoplasmic side. The helical transmembrane segment at 20–40 (AAGIFMALAQLIVIFFGYCDF) threads the bilayer. At 41–51 (KIKGYRIASYN) the chain is on the extracellular side. The chain crosses the membrane as a helical span at residues 52 to 72 (APTFASSFIILAVCLLLVVVL). Residues 73 to 104 (ENPEVKVTNSENSLFSALKQFFRVERKKLISC) lie on the Cytoplasmic side of the membrane. Residues 105–125 (LILLWSMFLSSFIMSEVVYFM) form a helical membrane-spanning segment. The Extracellular portion of the chain corresponds to 126–141 (PLFLTLHVNWDTKFQG). Residues 142-162 (IAFMVASILGVTGSYFAPKLI) form a helical membrane-spanning segment. Residues 163 to 199 (NVGCSCGRAKDGGLEESDTTGSETVEVKKKDSLYSGQ) lie on the Cytoplasmic side of the membrane. The helical transmembrane segment at 200 to 220 (VFLSIFALFVSLLGQAFMIGA) threads the bilayer. The Extracellular portion of the chain corresponds to 221-235 (SEALKHKSMPPTNSG). The chain crosses the membrane as a helical span at residues 236-256 (IFFSAGMSITLLGYNFLASSI). Over 257 to 275 (PALFSMYIDPKLKVQLMPS) the chain is Cytoplasmic. A helical transmembrane segment spans residues 276-296 (IGAISGIGKLVAPIVLAALYG). The Extracellular segment spans residues 297-300 (TRLG). Residues 301 to 321 (LSIAVGFGMILVAVSIPPLIW) form a helical membrane-spanning segment. The Cytoplasmic portion of the chain corresponds to 322-327 (LRKKRC).

Its subcellular location is the membrane. This is an uncharacterized protein from Saccharomyces cerevisiae (strain ATCC 204508 / S288c) (Baker's yeast).